Here is a 204-residue protein sequence, read N- to C-terminus: Ras-related protein RabQ (204 aa).

12 to 19 (GPPFVGKS) contacts GTP. Positions 34 to 42 (MDTTIGVEF) match the Effector region motif. GTP-binding positions include 60 to 64 (DTAGQ) and 118 to 121 (NKCD). 2 S-geranylgeranyl cysteine lipidation sites follow: Cys202 and Cys203.

It belongs to the small GTPase superfamily. Rab family.

It localises to the cell membrane. This Dictyostelium discoideum (Social amoeba) protein is Ras-related protein RabQ (rabQ).